The primary structure comprises 186 residues: Der GTPase-activating protein YihI (186 aa).

A disordered region spans residues 39-77 (LDAKAREDKKKRKHKGLASGSRHSAVEEKANKLQNEIKD). Positions 62–77 (SAVEEKANKLQNEIKD) are enriched in basic and acidic residues.

This sequence belongs to the YihI family. In terms of assembly, interacts with Der.

A GTPase-activating protein (GAP) that modifies Der/EngA GTPase function. May play a role in ribosome biogenesis. The sequence is that of Der GTPase-activating protein YihI from Haemophilus influenzae (strain 86-028NP).